The primary structure comprises 539 residues: MPVVRLYYEDLEEMVGASRELIIERLPMMGADIGKSPEADYIDVEFFPDRPDLYSAEGVARALQGFLGIRPGLPEYQVHTGSVEMRVDESVKSVRPIIGCAVVRGLRFTDPFIESLMSLQEDLHWGLGRNRRKVAIGVHDISRVRPPFRYIAEDPDKRRFVPLDFDESMSMREILERHPKGVAYRHILDGFERFPLIVDADDNVLSFPPVINGELTRVREDTTDLFIDVTGTDPVVYRALNIVVTALAERGGRIEGVRMISPDKEWISPDLSPARWTVTTSEANSLIGFNLSAEELAECLRRMRFGARHLDNDSVEVLVPAYRADIMHTWDIIEDAAKSYGYENLKAEMPRTLTIGRPHPMEELKDEVRDLMVGLGYLEVMPFTLTNEKVHFEMMRRSAGECTRVMHPISELHTIIRTAVLPGLMEILSLNQHHALPQRLFAVGDVVIDGRTKCHLSAVSIHSGAGFAEISSLVSAIMRELRISAEVVESSDGAFIPGRGADLMLNGARIGCFGEIHPEVISAFGLEHPVVGMELELSL.

Residues 271 to 347 (LSPARWTVTT…KSYGYENLKA (77 aa)) form the B5 domain. Positions 325, 331, 334, and 335 each coordinate Mg(2+).

The protein belongs to the phenylalanyl-tRNA synthetase beta subunit family. Type 2 subfamily. Tetramer of two alpha and two beta subunits. It depends on Mg(2+) as a cofactor.

It localises to the cytoplasm. The enzyme catalyses tRNA(Phe) + L-phenylalanine + ATP = L-phenylalanyl-tRNA(Phe) + AMP + diphosphate + H(+). This chain is Phenylalanine--tRNA ligase beta subunit, found in Methanothrix thermoacetophila (strain DSM 6194 / JCM 14653 / NBRC 101360 / PT) (Methanosaeta thermophila).